We begin with the raw amino-acid sequence, 315 residues long: Olfactory receptor 5M1 (315 aa).

The Extracellular segment spans residues 1 to 25 (MFSPNHTIVTEFILLGLTDDPVLEK). An N-linked (GlcNAc...) asparagine glycan is attached at Asn-5. A helical membrane pass occupies residues 26–46 (ILFGVFLAIYLITLAGNLCMI). The Cytoplasmic portion of the chain corresponds to 47-54 (LLIRTNSH). Residues 55–75 (LQTPMYFFLGHLSFVDICYSS) traverse the membrane as a helical segment. At 76-99 (NVTPNMLHNFLSEQKTISYAGCFT) the chain is on the extracellular side. An intrachain disulfide couples Cys-97 to Cys-189. The helical transmembrane segment at 100 to 120 (QCLLFIALVITEFYILASMAL) threads the bilayer. Over 121–139 (DRYVAICSPLHYSSRMSKN) the chain is Cytoplasmic. Residues 140–160 (ICVCLVTIPYMYGFLSGFSQS) form a helical membrane-spanning segment. Residues 161 to 196 (LLTFHLSFCGSLEINHFYCADPPLIMLACSDTRVKK) are Extracellular-facing. A helical membrane pass occupies residues 197–217 (MAMFVVAGFNLSSSLFIILLS). At 218–237 (YLFIFAAIFRIRSAEGRHKA) the chain is on the cytoplasmic side. A helical membrane pass occupies residues 238–258 (FSTCASHLTIVTLFYGTLFCM). Over 259-271 (YVRPPSEKSVEES) the chain is Extracellular. A helical membrane pass occupies residues 272 to 292 (KITAVFYTFLSPMLNPLIYSL). Residues 293–315 (RNTDVILAMQQMIRGKSFHKIAV) lie on the Cytoplasmic side of the membrane.

It belongs to the G-protein coupled receptor 1 family.

The protein localises to the cell membrane. Functionally, odorant receptor. The polypeptide is Olfactory receptor 5M1 (OR5M1) (Homo sapiens (Human)).